The following is a 225-amino-acid chain: MSMLDGEWAKAVGAEFKKPYYRDLYNFVRDEYATHVVYPPADDIFNAMHFTPLDKVKVLILGQDPYHNVNQAHGLSFSVLPSQKDIPPSLQNIYKELHDDLGCDIPNNGYLKKWADQGVLLLNTVLTVRAHQANSHQGHGWEKFTDAIIEAVNEQDRPIVYMLWGRPAQSKIPMLTNPKHLILKAPHPSPLSAYRGFFGCKHFSKANEFLKEHGVEPVDWQIEDI.

Residue Asp64 is the Proton acceptor of the active site.

This sequence belongs to the uracil-DNA glycosylase (UDG) superfamily. UNG family.

It localises to the cytoplasm. It carries out the reaction Hydrolyzes single-stranded DNA or mismatched double-stranded DNA and polynucleotides, releasing free uracil.. Functionally, excises uracil residues from the DNA which can arise as a result of misincorporation of dUMP residues by DNA polymerase or due to deamination of cytosine. The sequence is that of Uracil-DNA glycosylase from Agathobacter rectalis (strain ATCC 33656 / DSM 3377 / JCM 17463 / KCTC 5835 / VPI 0990) (Eubacterium rectale).